The sequence spans 28 residues: Omega-conotoxin-like CnVIIH (28 aa).

3 disulfides stabilise this stretch: cysteine 1-cysteine 16, cysteine 8-cysteine 20, and cysteine 15-cysteine 27. Proline 7 is subject to 4-hydroxyproline; partial. Methionine 12 carries the methionine sulfoxide modification. The residue at position 27 (cysteine 27) is a Cysteine amide.

It belongs to the conotoxin O1 superfamily. As to expression, expressed by the venom duct.

The protein resides in the secreted. In terms of biological role, omega-conotoxins act at presynaptic membranes, they bind and block voltage-gated calcium channels (Cav). This toxin blocks N-type calcium channels (Cav2.2/CACNA1B) with high potency. Unexpectedly, it does not show any blocking activity at amphibian neuromuscular junction. In vivo, when intracerebroventricularly injected into mice causes shaking activity, and, at higher doses, causes mild tremors. When injected intramuscularly into fish, it causes paralysis, and, at higher doses, causes death. The sequence is that of Omega-conotoxin-like CnVIIH from Conus consors (Singed cone).